Reading from the N-terminus, the 225-residue chain is MGFGDLKSPAGLQVLNDYLADKSYIEGYVPSQADVAVFEAVSGPPPADLCHALRWYNHIKSYEKEKASLPGIKKALGTYGPADVEDTTGSGATDSKDDDDIDLFGSDDEEESEEAKRLREERLAQYESKKAKKPALVAKSSILLDVKPWDDETDMVKLEECVRSIQADGLVWGSSKLVPVGYGIKKLQIQCVVEDDKVGTDMLEEQITAFEDYVQSMDVAAFNKI.

One can recognise a GST C-terminal domain in the interval 2-84; sequence GFGDLKSPAG…ALGTYGPADV (83 aa). Lys-7 is subject to N6-acetyllysine. 2 positions are modified to phosphoserine: Ser-8 and Ser-42. Residues 80 to 114 are disordered; that stretch reads GPADVEDTTGSGATDSKDDDDIDLFGSDDEEESEE. Phosphothreonine is present on residues Thr-88 and Thr-93. A Phosphoserine modification is found at Ser-95. A compositionally biased stretch (acidic residues) spans 96–113; it reads KDDDDIDLFGSDDEEESE. Residue Ser-106 is modified to Phosphoserine; by CK2. Lys-147 participates in a covalent cross-link: Glycyl lysine isopeptide (Lys-Gly) (interchain with G-Cter in SUMO2). Ser-174 is subject to Phosphoserine.

It belongs to the EF-1-beta/EF-1-delta family. In terms of assembly, EF-1 is composed of 4 subunits: alpha, beta (alpha subunit of the eEF1B subcomplex), delta (beta subunit of the eEF1B subcomplex), and gamma (gamma subunit of the eEF1B subcomplex). Interacts with elongation factor EEF1A1. Phosphorylation affects the GDP/GTP exchange rate.

Catalytic subunit of the guanine nucleotide exchange factor (GEF) (eEF1B subcomplex) of the eukaryotic elongation factor 1 complex (eEF1). Stimulates the exchange of GDP for GTP on elongation factor 1A (eEF1A), probably by displacing GDP from the nucleotide binding pocket in eEF1A. The sequence is that of Elongation factor 1-beta (EEF1B) from Oryctolagus cuniculus (Rabbit).